Consider the following 70-residue polypeptide: ATP synthase subunit c (70 aa).

2 helical membrane-spanning segments follow: residues 4 to 24 (IAAA…NGLI) and 45 to 65 (LMFI…VIAF).

This sequence belongs to the ATPase C chain family. F-type ATPases have 2 components, F(1) - the catalytic core - and F(0) - the membrane proton channel. F(1) has five subunits: alpha(3), beta(3), gamma(1), delta(1), epsilon(1). F(0) has three main subunits: a(1), b(2) and c(10-14). The alpha and beta chains form an alternating ring which encloses part of the gamma chain. F(1) is attached to F(0) by a central stalk formed by the gamma and epsilon chains, while a peripheral stalk is formed by the delta and b chains.

The protein resides in the cell membrane. F(1)F(0) ATP synthase produces ATP from ADP in the presence of a proton or sodium gradient. F-type ATPases consist of two structural domains, F(1) containing the extramembraneous catalytic core and F(0) containing the membrane proton channel, linked together by a central stalk and a peripheral stalk. During catalysis, ATP synthesis in the catalytic domain of F(1) is coupled via a rotary mechanism of the central stalk subunits to proton translocation. In terms of biological role, key component of the F(0) channel; it plays a direct role in translocation across the membrane. A homomeric c-ring of between 10-14 subunits forms the central stalk rotor element with the F(1) delta and epsilon subunits. The polypeptide is ATP synthase subunit c (Bacillus licheniformis (strain ATCC 14580 / DSM 13 / JCM 2505 / CCUG 7422 / NBRC 12200 / NCIMB 9375 / NCTC 10341 / NRRL NRS-1264 / Gibson 46)).